Consider the following 1163-residue polypeptide: Type IV pilus biogenesis factor PilY1 (1163 aa).

The first 30 residues, 1-30, serve as a signal peptide directing secretion; it reads MKSALHQIGKTSLAAALSGAVLLSAQTTHA. The interval 329 to 352 is disordered; the sequence is SVGNADSTSRSLPDGKSYSSQTPY. Residues aspartate 600, aspartate 602, asparagine 604, and aspartate 608 each contribute to the Ca(2+) site. Positions 619-621 are integrin-binding motif RGD; the sequence is RGD. The Ca(2+) site is built by aspartate 851, asparagine 853, aspartate 855, valine 857, and aspartate 859. The segment at 1138-1163 is disordered; the sequence is SGECLTVNPGPNTRGRQNWRPIEGKN.

The protein belongs to the PilY1 family. As to quaternary structure, interacts (via C-terminal 532-1163) with host integrins alpha-V/beta-3 (ITGAV/ITGB3) and alpha-V/beta-5 (ITGAV/ITGB5).

It localises to the fimbrium. The protein resides in the membrane. It is found in the cytoplasm. The protein localises to the cytosol. Functionally, involved in pilus assembly, twitching motility and adhesion to host cells. Primes type IV pili (T4P) assembly and is required for inclusion of minor pilins PilV, PilW and PilX to the surface pili. Stabilizes assembled pilus fibers likely by antagonizing retraction mediated by PilT. Calcium-binding and calcium release by PilY1 seem to be essential for twitching motility and for regulation of pilus retraction dynamics of PilT. Adhesin for human tissue specifically recognizing a host receptor localized or enriched on basolateral epithelial cell surfaces. Binds host integrins in an calcium-dependent manner in vitro and this interaction may be employed by the bacterium to mediate host epithelial cell binding in vivo. The sequence is that of Type IV pilus biogenesis factor PilY1 from Pseudomonas aeruginosa (strain PAK).